A 242-amino-acid polypeptide reads, in one-letter code: Probable 2-phosphosulfolactate phosphatase (242 aa).

Belongs to the ComB family. Mg(2+) is required as a cofactor.

The catalysed reaction is (2R)-O-phospho-3-sulfolactate + H2O = (2R)-3-sulfolactate + phosphate. The sequence is that of Probable 2-phosphosulfolactate phosphatase from Prochlorococcus marinus (strain NATL1A).